Reading from the N-terminus, the 983-residue chain is MDCQLSILLLLSCSVLDSFGELIPQPSNEVNLLDSKTIQGELGWISYPSHGWEEISGVDEHYTPIRTYQVCNVMDHSQNNWLRTNWVPRNSAQKIYVELKFTLRDCNSIPLVLGTCKETFNLYYMESDDDHGVKFREHQFTKIDTIAADESFTQMDLGDRILKLNTEIREVGPVNKKGFYLAFQDVGACVALVSVRVYFKKCPFTVKNLAMFPDTVPMDSQSLVEVRGSCVNNSKEEDPPRMYCSTEGEWLVPIGKCSCNAGYEERGFMCQACRPGFYKALDGNMKCAKCPPHSSTQEDGSMNCRCENNYFRADKDPPSMACTRPPSSPRNVISNINETSVILDWSWPLDTGGRKDVTFNIICKKCGWNIKQCEPCSPNVRFLPRQFGLTNTTVTVTDLLAHTNYTFEIDAVNGVSELSSPPRQFAAVSITTNQAAPSPVLTIKKDRTSRNSISLSWQEPEHPNGIILDYEVKYYEKQEQETSYTILRARGTNVTISSLKPDTIYVFQIRARTAAGYGTNSRKFEFETSPDSFSISGESSQVVMIAISAAVAIILLTVVIYVLIGRFCGYKSKHGADEKRLHFGNGHLKLPGLRTYVDPHTYEDPTQAVHEFAKELDATNISIDKVVGAGEFGEVCSGRLKLPSKKEISVAIKTLKVGYTEKQRRDFLGEASIMGQFDHPNIIRLEGVVTKSKPVMIVTEYMENGSLDSFLRKHDAQFTVIQLVGMLRGIASGMKYLSDMGYVHRDLAARNILINSNLVCKVSDFGLSRVLEDDPEAAYTTRGGKIPIRWTSPEAIAYRKFTSASDVWSYGIVLWEVMSYGERPYWEMSNQDVIKAVDEGYRLPPPMDCPAALYQLMLDCWQKDRNNRPKFEQIVSILDKLIRNPGSLKIITSAAARPSNLLLDQSNVDITTFRTTGDWLNGVWTAHCKEIFTGVEYSSCDTIAKISTDDMKKVGVTVVGPQKKIISSIKALETQSKNGPVPV.

The signal sequence occupies residues 1–20; the sequence is MDCQLSILLLLSCSVLDSFG. Over 21–541 the chain is Extracellular; it reads ELIPQPSNEV…SFSISGESSQ (521 aa). In terms of domain architecture, Eph LBD spans 29–207; sequence EVNLLDSKTI…YFKKCPFTVK (179 aa). N-linked (GlcNAc...) asparagine glycans are attached at residues Asn232, Asn337, Asn391, Asn404, and Asn493. Fibronectin type-III domains follow at residues 325–435 and 436–531; these read PPSS…TNQA and APSP…TSPD. Residues 542–565 traverse the membrane as a helical segment; that stretch reads VVMIAISAAVAIILLTVVIYVLIG. Residues 566-983 lie on the Cytoplasmic side of the membrane; it reads RFCGYKSKHG…TQSKNGPVPV (418 aa). 2 positions are modified to phosphotyrosine; by autocatalysis: Tyr596 and Tyr602. A Protein kinase domain is found at 621-882; it reads ISIDKVVGAG…QIVSILDKLI (262 aa). ATP contacts are provided by residues 628 to 633, Lys653, and 700 to 706; these read GAGEFG and EYMENGS. Phosphotyrosine; by autocatalysis is present on Tyr701. Asp746 (proton acceptor) is an active-site residue. 750–751 contacts ATP; sequence RN. Tyr779 is subject to Phosphotyrosine; by autocatalysis. Residues 911-975 form the SAM domain; it reads TTFRTTGDWL…ISSIKALETQ (65 aa). A Phosphotyrosine modification is found at Tyr937. Residues 981–983 carry the PDZ-binding motif; it reads VPV.

The protein belongs to the protein kinase superfamily. Tyr protein kinase family. Ephrin receptor subfamily. Heterotetramer upon binding of the ligand. The heterotetramer is composed of an ephrin dimer and a receptor dimer. Oligomerization is probably required to induce biological responses. Forms a ternary EFNA5-EPHA3-ADAM10 complex mediating EFNA5 extracellular domain shedding by ADAM10 which regulates the EFNA5-EPHA3 complex internalization and function. Interacts with NCK1 (via SH2 domain); mediates EFNA5-EPHA3 signaling. Interacts (phosphorylated) with PTPN1; dephosphorylates EPHA3 and may regulate its trafficking and function. Interacts (phosphorylated) with CRK; mediates EFNA5-EPHA3 signaling through RHOA GTPase activation. In terms of processing, autophosphorylates upon activation by EFNA5. Phosphorylation on Tyr-602 mediates interaction with NCK1. Dephosphorylated by PTPN1. Widely expressed. Highest level in placenta.

The protein resides in the cell membrane. The protein localises to the secreted. It carries out the reaction L-tyrosyl-[protein] + ATP = O-phospho-L-tyrosyl-[protein] + ADP + H(+). Its function is as follows. Receptor tyrosine kinase which binds promiscuously membrane-bound ephrin family ligands residing on adjacent cells, leading to contact-dependent bidirectional signaling into neighboring cells. The signaling pathway downstream of the receptor is referred to as forward signaling while the signaling pathway downstream of the ephrin ligand is referred to as reverse signaling. Highly promiscuous for ephrin-A ligands it binds preferentially EFNA5. Upon activation by EFNA5 regulates cell-cell adhesion, cytoskeletal organization and cell migration. Plays a role in cardiac cells migration and differentiation and regulates the formation of the atrioventricular canal and septum during development probably through activation by EFNA1. Involved in the retinotectal mapping of neurons. May also control the segregation but not the guidance of motor and sensory axons during neuromuscular circuit development. In Homo sapiens (Human), this protein is Ephrin type-A receptor 3 (EPHA3).